Consider the following 332-residue polypeptide: Aspartate carbamoyltransferase catalytic subunit (332 aa).

Positions 1-20 (MPNTHDTKNNVSPSEYAKFD) are disordered. The carbamoyl phosphate site is built by Arg72 and Thr73. Lys100 is a binding site for L-aspartate. 3 residues coordinate carbamoyl phosphate: Arg122, His152, and Gln155. L-aspartate is bound by residues Arg186 and Arg241. Positions 282 and 283 each coordinate carbamoyl phosphate.

Belongs to the aspartate/ornithine carbamoyltransferase superfamily. ATCase family. As to quaternary structure, heterododecamer (2C3:3R2) of six catalytic PyrB chains organized as two trimers (C3), and six regulatory PyrI chains organized as three dimers (R2).

It carries out the reaction carbamoyl phosphate + L-aspartate = N-carbamoyl-L-aspartate + phosphate + H(+). The protein operates within pyrimidine metabolism; UMP biosynthesis via de novo pathway; (S)-dihydroorotate from bicarbonate: step 2/3. Functionally, catalyzes the condensation of carbamoyl phosphate and aspartate to form carbamoyl aspartate and inorganic phosphate, the committed step in the de novo pyrimidine nucleotide biosynthesis pathway. This chain is Aspartate carbamoyltransferase catalytic subunit, found in Psychrobacter sp. (strain TAD1).